The chain runs to 312 residues: Chorismate mutase 1, chloroplastic (312 aa).

A chloroplast-targeting transit peptide spans 1–44 (MAFKLATKAAAASPAAAHRGGLARGPEGTSRVAFGPAPRNKGLR). The interval 16–58 (AAHRGGLARGPEGTSRVAFGPAPRNKGLRAANNSATPVAKEER) is disordered. Residues Arg58 and 190 to 193 (NAGS) each bind L-phenylalanine. Residues Arg58 and 190–193 (NAGS) each bind L-tyrosine. Positions 58-312 (RVDRSEILTL…QIAYLLRRLD (255 aa)) constitute a Chorismate mutase domain.

Homodimer. Interacts with Cmu1 of the fungal pathogen Ustilago maydis.

The protein resides in the plastid. It is found in the chloroplast. The enzyme catalyses chorismate = prephenate. It participates in metabolic intermediate biosynthesis; prephenate biosynthesis; prephenate from chorismate: step 1/1. With respect to regulation, allosterically inhibited by tyrosine and phenylalanine. Activated by tryptophan. Its function is as follows. May play a role in chloroplast biogenesis. In Zea mays (Maize), this protein is Chorismate mutase 1, chloroplastic.